The chain runs to 226 residues: Phosphoglycolate phosphatase (226 aa).

The Nucleophile role is filled by Asp-12. Positions 12, 14, and 177 each coordinate Mg(2+).

The protein belongs to the HAD-like hydrolase superfamily. CbbY/CbbZ/Gph/YieH family. Mg(2+) serves as cofactor.

The catalysed reaction is 2-phosphoglycolate + H2O = glycolate + phosphate. The protein operates within organic acid metabolism; glycolate biosynthesis; glycolate from 2-phosphoglycolate: step 1/1. Functionally, specifically catalyzes the dephosphorylation of 2-phosphoglycolate. Is involved in the dissimilation of the intracellular 2-phosphoglycolate formed during the DNA repair of 3'-phosphoglycolate ends, a major class of DNA lesions induced by oxidative stress. In Colwellia psychrerythraea (strain 34H / ATCC BAA-681) (Vibrio psychroerythus), this protein is Phosphoglycolate phosphatase.